The sequence spans 1030 residues: Carbamoyl phosphate synthase arginine-specific large chain (1030 aa).

The segment at 1–401 (MPKDTSISSI…AIQKAAASLE (401 aa)) is carboxyphosphate synthetic domain. Residues Arg-129, Arg-169, Gly-175, Gly-176, Lys-208, Ile-210, Glu-215, Gly-241, Val-242, His-243, Gln-284, and Glu-298 each coordinate ATP. The ATP-grasp 1 domain maps to 133–327 (RSLMNELKQP…IAKMAAKLAV (195 aa)). The Mg(2+) site is built by Gln-284, Glu-298, and Asn-300. Mn(2+) is bound by residues Gln-284, Glu-298, and Asn-300. The segment at 402–548 (LKNIGTHLPE…YSTYFGETDG (147 aa)) is oligomerization domain. The carbamoyl phosphate synthetic domain stretch occupies residues 549–928 (DISRKEKKRA…ALKKIYTRVW (380 aa)). The ATP-grasp 2 domain occupies 675-863 (YQLLDELGLK…MIPLATRLLA (189 aa)). Arg-711, Gln-748, Val-750, Glu-754, Gly-779, Val-780, His-781, Ser-782, Gln-822, and Glu-834 together coordinate ATP. Gln-822, Glu-834, and Asn-836 together coordinate Mg(2+). Mn(2+)-binding residues include Gln-822, Glu-834, and Asn-836. Residues 925-1027 (TRVWSQKGSI…KDLYKKEVAS (103 aa)) form the MGS-like domain. Residues 929 to 1030 (SQKGSIYLQN…YKKEVASCTQ (102 aa)) are allosteric domain.

The protein belongs to the CarB family. In terms of assembly, composed of two chains; the small (or glutamine) chain promotes the hydrolysis of glutamine to ammonia, which is used by the large (or ammonia) chain to synthesize carbamoyl phosphate. Tetramer of heterodimers (alpha,beta)4. Mg(2+) is required as a cofactor. It depends on Mn(2+) as a cofactor.

The catalysed reaction is hydrogencarbonate + L-glutamine + 2 ATP + H2O = carbamoyl phosphate + L-glutamate + 2 ADP + phosphate + 2 H(+). It carries out the reaction hydrogencarbonate + NH4(+) + 2 ATP = carbamoyl phosphate + 2 ADP + phosphate + 2 H(+). It functions in the pathway amino-acid biosynthesis; L-arginine biosynthesis; carbamoyl phosphate from bicarbonate: step 1/1. Functionally, large subunit of the glutamine-dependent carbamoyl phosphate synthetase (CPSase). CPSase catalyzes the formation of carbamoyl phosphate from the ammonia moiety of glutamine, carbonate, and phosphate donated by ATP, constituting the first step of the biosynthetic pathway leading to arginine and/or urea. The large subunit (synthetase) binds the substrates ammonia (free or transferred from glutamine from the small subunit), hydrogencarbonate and ATP and carries out an ATP-coupled ligase reaction, activating hydrogencarbonate by forming carboxy phosphate which reacts with ammonia to form carbamoyl phosphate. In Bacillus subtilis (strain 168), this protein is Carbamoyl phosphate synthase arginine-specific large chain.